Consider the following 151-residue polypeptide: MRCPFCNSVDTSVKNSRPSDCKMSVRRRRSCDSCNSRFTTVEELLLKPVKVLKKDGSVEAFDRQKLLTSIILATKKRPVTRDQIDMVVSNMFYKLEAIKGSVVPSGVIGGMVMESLFALDKVSYIRFASVYMNFSDVNDFSGIVERVQEVV.

Residues 3 to 34 fold into a zinc finger; sequence CPFCNSVDTSVKNSRPSDCKMSVRRRRSCDSC. The ATP-cone domain maps to 49–139; it reads VKVLKKDGSV…VYMNFSDVND (91 aa).

This sequence belongs to the NrdR family. Zn(2+) is required as a cofactor.

Functionally, negatively regulates transcription of bacterial ribonucleotide reductase nrd genes and operons by binding to NrdR-boxes. The chain is Transcriptional repressor NrdR from Anaplasma marginale (strain Florida).